The primary structure comprises 715 residues: Methylcrotonoyl-CoA carboxylase subunit alpha, mitochondrial (715 aa).

The transit peptide at 1 to 38 (MAAAALLAAVDRNQLRRVPILLLQPREWPWKHRTVKYG) directs the protein to the mitochondrion. Residues 45-490 (ITKVLIANRG…HTDFIPQHHK (446 aa)) form the Biotin carboxylation domain. Lysine 159 is a binding site for ATP. In terms of domain architecture, ATP-grasp spans 163–360 (KSIMAAAGVP…LVEWQLRIAA (198 aa)). Lysine 193 is modified (N6-acetyllysine). Residues lysine 201 and 207–208 (GG) each bind ATP. Lysine 233 is modified (N6-acetyllysine). Residues histidine 251, histidine 278, and glutamate 318 each contribute to the ATP site. The active site involves arginine 335. The residue at position 490 (lysine 490) is an N6-acetyllysine. An N6-acetyllysine; alternate modification is found at lysine 577. N6-succinyllysine; alternate is present on lysine 577. The Biotinyl-binding domain maps to 622-711 (SIEVGIPVPK…NRHAPLVEFE (90 aa)). Residue lysine 677 is modified to N6-biotinyllysine.

As to quaternary structure, probably a dodecamer composed of six biotin-containing alpha subunits (MCCC1) and six beta (MCCC2) subunits. Interacts (via the biotin carboxylation domain) with SIRT4. Requires biotin as cofactor. In terms of processing, acetylated.

It localises to the mitochondrion matrix. The enzyme catalyses 3-methylbut-2-enoyl-CoA + hydrogencarbonate + ATP = 3-methyl-(2E)-glutaconyl-CoA + ADP + phosphate + H(+). It participates in amino-acid degradation; L-leucine degradation; (S)-3-hydroxy-3-methylglutaryl-CoA from 3-isovaleryl-CoA: step 2/3. In terms of biological role, biotin-attachment subunit of the 3-methylcrotonyl-CoA carboxylase, an enzyme that catalyzes the conversion of 3-methylcrotonyl-CoA to 3-methylglutaconyl-CoA, a critical step for leucine and isovaleric acid catabolism. This Rattus norvegicus (Rat) protein is Methylcrotonoyl-CoA carboxylase subunit alpha, mitochondrial.